The chain runs to 364 residues: Methylthioribose-1-phosphate isomerase (364 aa).

Substrate is bound by residues Arg53–Ala55, Arg90, and Gln203. The active-site Proton donor is Asp244. Substrate is bound at residue Asn254 to Lys255.

This sequence belongs to the eIF-2B alpha/beta/delta subunits family. MtnA subfamily.

It catalyses the reaction 5-(methylsulfanyl)-alpha-D-ribose 1-phosphate = 5-(methylsulfanyl)-D-ribulose 1-phosphate. Its pathway is amino-acid biosynthesis; L-methionine biosynthesis via salvage pathway; L-methionine from S-methyl-5-thio-alpha-D-ribose 1-phosphate: step 1/6. Its function is as follows. Catalyzes the interconversion of methylthioribose-1-phosphate (MTR-1-P) into methylthioribulose-1-phosphate (MTRu-1-P). The chain is Methylthioribose-1-phosphate isomerase from Sinorhizobium medicae (strain WSM419) (Ensifer medicae).